The chain runs to 130 residues: Cuticle protein 14 isoform b (130 aa).

The region spanning 24–90 (IGNYNFGYNE…NVHTNEPGTD (67 aa)) is the Chitin-binding type R&amp;R domain.

The protein is Cuticle protein 14 isoform b of Limulus polyphemus (Atlantic horseshoe crab).